We begin with the raw amino-acid sequence, 79 residues long: Dolichyl-diphosphooligosaccharide--protein glycosyltransferase subunit TMEM258 (79 aa).

The next 2 membrane-spanning stretches (helical) occupy residues 17–37 (VFPHLTVVLLAIGMFFTAWFF) and 55–75 (LISLVASLFMGFGVLFLLLWV).

The protein belongs to the OST5 family. As to quaternary structure, component of the oligosaccharyltransferase (OST) complex.

The protein localises to the membrane. Its subcellular location is the endoplasmic reticulum. It localises to the cytoplasm. Its pathway is protein modification; protein glycosylation. Subunit of the oligosaccharyl transferase (OST) complex that catalyzes the initial transfer of a defined glycan (Glc(3)Man(9)GlcNAc(2) in eukaryotes) from the lipid carrier dolichol-pyrophosphate to an asparagine residue within an Asn-X-Ser/Thr consensus motif in nascent polypeptide chains, the first step in protein N-glycosylation. N-glycosylation occurs cotranslationally and the complex associates with the Sec61 complex at the channel-forming translocon complex that mediates protein translocation across the endoplasmic reticulum (ER). All subunits are required for a maximal enzyme activity. This is Dolichyl-diphosphooligosaccharide--protein glycosyltransferase subunit TMEM258 from Gallus gallus (Chicken).